Consider the following 240-residue polypeptide: 2,3,4,5-tetrahydropyridine-2,6-dicarboxylate N-acetyltransferase (240 aa).

Belongs to the transferase hexapeptide repeat family. DapH subfamily.

It catalyses the reaction (S)-2,3,4,5-tetrahydrodipicolinate + acetyl-CoA + H2O = L-2-acetamido-6-oxoheptanedioate + CoA. It functions in the pathway amino-acid biosynthesis; L-lysine biosynthesis via DAP pathway; LL-2,6-diaminopimelate from (S)-tetrahydrodipicolinate (acetylase route): step 1/3. Functionally, catalyzes the transfer of an acetyl group from acetyl-CoA to tetrahydrodipicolinate. In Bacillus cytotoxicus (strain DSM 22905 / CIP 110041 / 391-98 / NVH 391-98), this protein is 2,3,4,5-tetrahydropyridine-2,6-dicarboxylate N-acetyltransferase.